The sequence spans 571 residues: Dehydrocurvularin exporter (571 aa).

The segment at Met-1–Asp-34 is disordered. The span at Glu-8–Arg-17 shows a compositional bias: basic and acidic residues. Residues Gln-19–Gln-28 are compositionally biased toward polar residues. N-linked (GlcNAc...) asparagine glycosylation occurs at Asn-25. 14 helical membrane passes run Ile-47–Ile-67, Trp-86–Phe-106, Phe-120–Ile-140, Ala-143–Val-163, Leu-171–Gly-191, Trp-202–Leu-222, Ile-238–Thr-258, Val-275–Phe-295, Leu-317–Phe-337, Val-350–Ile-370, Phe-379–Val-399, Met-405–Met-425, Ile-443–Phe-463, and Val-514–Phe-534. Residues Pro-538–Ser-571 are disordered.

It belongs to the major facilitator superfamily. TCR/Tet family.

It localises to the cell membrane. Its function is as follows. Efflux pump that is probably involved in the export of dehydrocurvularin. The sequence is that of Dehydrocurvularin exporter from Aspergillus terreus.